A 179-amino-acid chain; its full sequence is MTRQRIAIDMDEVLADTLGAVVKAVNERADLNIKMESLNGKKLKHMIPEHEGLVMDILKEPGFFRNLDVMPHAQEVVKQLNEHYDIYIATAAMDVPTSFHDKYEWLLEYFPFLDPQHFVFCGRKNIILADYLIDDNPKQLEIFEGKSIMFTASHNVYEHRFERVSGWRDVKNYFNSIEK.

The active-site Nucleophile is aspartate 9. 3 residues coordinate Mg(2+): aspartate 9, aspartate 11, and aspartate 135. Aspartate 11 serves as the catalytic Proton donor.

Belongs to the 5'(3')-deoxyribonucleotidase family. It depends on Mg(2+) as a cofactor.

Dephosphorylates the 5' and 2'(3')-phosphates of deoxyribonucleotides. The sequence is that of Putative 5'(3')-deoxyribonucleotidase from Staphylococcus epidermidis (strain ATCC 12228 / FDA PCI 1200).